The following is a 136-amino-acid chain: Inner membrane protein YbhQ (136 aa).

Residues 1 to 12 (MKWQQRVRVATG) are Cytoplasmic-facing. A helical transmembrane segment spans residues 13 to 33 (LSCWQIMLHLLVVALLVVGWM). Residues 34–37 (SKTL) lie on the Periplasmic side of the membrane. The helical transmembrane segment at 38 to 58 (VHVGVGLCALYCVTVVMMLVF) threads the bilayer. Over 59–71 (QRHPEQRWREVAD) the chain is Cytoplasmic. Residues 72–92 (VLEELTTTWYFGAALIVLWLL) form a helical membrane-spanning segment. At 93–99 (SRVLENN) the chain is on the periplasmic side. A helical membrane pass occupies residues 100–120 (FLLAIAGLAILAGPAVVSLLA). Topologically, residues 121–136 (KDKKLHHLTSKHRVRR) are cytoplasmic.

The protein localises to the cell inner membrane. This Escherichia coli O157:H7 protein is Inner membrane protein YbhQ (ybhQ).